Reading from the N-terminus, the 92-residue chain is DNA-directed RNA polymerase subunit omega (92 aa).

The protein belongs to the RNA polymerase subunit omega family. The RNAP catalytic core consists of 2 alpha, 1 beta, 1 beta' and 1 omega subunit. When a sigma factor is associated with the core the holoenzyme is formed, which can initiate transcription.

The catalysed reaction is RNA(n) + a ribonucleoside 5'-triphosphate = RNA(n+1) + diphosphate. Promotes RNA polymerase assembly. Latches the N- and C-terminal regions of the beta' subunit thereby facilitating its interaction with the beta and alpha subunits. In Shewanella amazonensis (strain ATCC BAA-1098 / SB2B), this protein is DNA-directed RNA polymerase subunit omega.